Consider the following 137-residue polypeptide: Ribosome-binding factor A (137 aa).

Belongs to the RbfA family. Monomer. Binds 30S ribosomal subunits, but not 50S ribosomal subunits or 70S ribosomes.

The protein resides in the cytoplasm. One of several proteins that assist in the late maturation steps of the functional core of the 30S ribosomal subunit. Associates with free 30S ribosomal subunits (but not with 30S subunits that are part of 70S ribosomes or polysomes). Required for efficient processing of 16S rRNA. May interact with the 5'-terminal helix region of 16S rRNA. The sequence is that of Ribosome-binding factor A from Cereibacter sphaeroides (strain ATCC 17029 / ATH 2.4.9) (Rhodobacter sphaeroides).